Here is a 60-residue protein sequence, read N- to C-terminus: Large ribosomal subunit protein uL30 (60 aa).

It belongs to the universal ribosomal protein uL30 family. In terms of assembly, part of the 50S ribosomal subunit.

In Paraburkholderia phytofirmans (strain DSM 17436 / LMG 22146 / PsJN) (Burkholderia phytofirmans), this protein is Large ribosomal subunit protein uL30.